A 591-amino-acid polypeptide reads, in one-letter code: Eukaryotic translation initiation factor 3 subunit D (591 aa).

Positions 100-159 (SGGNPDEDAAFRLVDGKPPPRPKFGPKWRFNPHHNRNQLPQRRDEEVEAKKRDAEKERAR) are disordered. Residues 123 to 135 (FGPKWRFNPHHNR) show a composition bias toward basic residues. The segment covering 140–159 (QRRDEEVEAKKRDAEKERAR) has biased composition (basic and acidic residues). An RNA gate region spans residues 309 to 323 (QLDLLSVHETSQEPL). A compositionally biased stretch (acidic residues) spans 549 to 560 (DYVEEPLPEDEQ). A disordered region spans residues 549–591 (DYVEEPLPEDEQVQPTEENTEGAEASVAATKETEEKKADDAQA). The segment covering 579 to 591 (KETEEKKADDAQA) has biased composition (basic and acidic residues).

It belongs to the eIF-3 subunit D family. As to quaternary structure, component of the eukaryotic translation initiation factor 3 (eIF-3) complex, which is composed of at least 13 different subunits.

It localises to the cytoplasm. Its function is as follows. mRNA cap-binding component of the eukaryotic translation initiation factor 3 (eIF-3) complex, which is involved in protein synthesis of a specialized repertoire of mRNAs and, together with other initiation factors, stimulates binding of mRNA and methionyl-tRNAi to the 40S ribosome. The eIF-3 complex specifically targets and initiates translation of a subset of mRNAs involved in cell proliferation. In the eIF-3 complex, eif3d specifically recognizes and binds the 7-methylguanosine cap of a subset of mRNAs. The chain is Eukaryotic translation initiation factor 3 subunit D (TIF3D1) from Arabidopsis thaliana (Mouse-ear cress).